The chain runs to 770 residues: Cyclopiane-type diterpene synthase (770 aa).

Residues 5-335 are terpene cyclase; it reads ITDEYAVGID…VPRYCKVDRN (331 aa). Residues aspartate 97 and aspartate 101 each coordinate Mg(2+). Residues aspartate 97, aspartate 101, 190 to 193, asparagine 234, 238 to 242, and 328 to 329 each bind substrate; these read RIVD, SWDKE, and RY. Positions 97-101 match the DDXXD 1 motif; that stretch reads DDETD. The NSE/DTE signature appears at 234–242; that stretch reads NDLFSWDKE. Positions 336–720 are prenyltransferase; sequence PYKDHLEKYG…WALRLLIMKL (385 aa). A disordered region spans residues 371-397; that stretch reads NQLKEPSSSTYKTHFSPLEPNPGPEQT. Residues 374–383 show a composition bias toward polar residues; it reads KEPSSSTYKT. Residues lysine 423, arginine 426, and histidine 455 each coordinate isopentenyl diphosphate. Aspartate 462 and aspartate 466 together coordinate Mg(2+). Residues 462–466 carry the DDXXD 2 motif; the sequence is DDIQD. A dimethylallyl diphosphate-binding site is contributed by arginine 471. An isopentenyl diphosphate-binding site is contributed by arginine 472. Residues lysine 548, threonine 549, glutamine 584, asparagine 591, lysine 620, and lysine 630 each coordinate dimethylallyl diphosphate.

This sequence in the N-terminal section; belongs to the terpene synthase family. In the C-terminal section; belongs to the FPP/GGPP synthase family. As to quaternary structure, hexamer. It depends on Mg(2+) as a cofactor.

It catalyses the reaction isopentenyl diphosphate + (2E,6E)-farnesyl diphosphate = (2E,6E,10E)-geranylgeranyl diphosphate + diphosphate. The enzyme catalyses (2E,6E,10E)-geranylgeranyl diphosphate + H2O = (+)-penichrysol + diphosphate. It functions in the pathway secondary metabolite biosynthesis; terpenoid biosynthesis. Bifunctional terpene synthase converts dimethylallyl diphosphate (DMAPP) and isopentenyl diphosphate (IPP) into a cyclopiane-type diterpene. The C-terminal prenyltransferase (PT) domain of PcCS catalyzes formation of geranylgeranyl pyrophosphate (GGPP), whereas the N-terminal terpene cyclase (TC) domain catalyzes the cyclization of GGPP to the cyclopiane-type diterpene penichrysol. The protein is Cyclopiane-type diterpene synthase of Penicillium chrysogenum (Penicillium notatum).